Reading from the N-terminus, the 714-residue chain is Polyribonucleotide nucleotidyltransferase (714 aa).

Mg(2+) is bound by residues aspartate 496 and aspartate 502. One can recognise a KH domain in the interval 562-621 (PRLLTIKIDPDLIGMVIGPGGKTIKGITEQTRAKVDIADDGTVTIASSESENAEKAKRLI). The 69-residue stretch at 631-699 (GDVYFGKVTR…NKGRINLTRL (69 aa)) folds into the S1 motif domain.

This sequence belongs to the polyribonucleotide nucleotidyltransferase family. Requires Mg(2+) as cofactor.

It is found in the cytoplasm. It catalyses the reaction RNA(n+1) + phosphate = RNA(n) + a ribonucleoside 5'-diphosphate. Its function is as follows. Involved in mRNA degradation. Catalyzes the phosphorolysis of single-stranded polyribonucleotides processively in the 3'- to 5'-direction. The polypeptide is Polyribonucleotide nucleotidyltransferase (Picosynechococcus sp. (strain ATCC 27264 / PCC 7002 / PR-6) (Agmenellum quadruplicatum)).